The sequence spans 553 residues: Zinc finger matrin-type protein 1 (553 aa).

The interval Thr16 to Asn36 is disordered. Matrin-type zinc fingers lie at residues Thr61–Leu91, Lys125–Gln155, Lys223–Arg253, and Tyr275–Met305. 2 disordered regions span residues Gln341–Val402 and His428–Phe553. Acidic residues predominate over residues Asp350–Pro362. Residues Arg431–Ser453 are compositionally biased toward low complexity. A compositionally biased stretch (basic residues) spans Lys456 to Ile476. The span at Arg477–Asp513 shows a compositional bias: basic and acidic residues.

Its subcellular location is the nucleus. The polypeptide is Zinc finger matrin-type protein 1 (zmat1) (Xenopus tropicalis (Western clawed frog)).